We begin with the raw amino-acid sequence, 360 residues long: Protein pelota homolog (360 aa).

The protein belongs to the eukaryotic release factor 1 family. Pelota subfamily. Monomer. Requires a divalent metal cation as cofactor.

It localises to the cytoplasm. May function in recognizing stalled ribosomes, interact with stem-loop structures in stalled mRNA molecules, and effect endonucleolytic cleavage of the mRNA. May play a role in the release non-functional ribosomes and degradation of damaged mRNAs. Has endoribonuclease activity. The protein is Protein pelota homolog of Hyperthermus butylicus (strain DSM 5456 / JCM 9403 / PLM1-5).